The chain runs to 470 residues: Tigger transposable element-derived protein 3 (470 aa).

The HTH psq-type domain occupies 3–55; that stretch reads LNTKKKLHALSLAEKIQVLELLDESKMSQSEVARRFQVSQPQISRICKNKEKL. 2 DNA-binding regions (H-T-H motif) span residues 31–51 and 100–130; these read QSEV…ICKN and PMLL…WKRR. The 71-residue stretch at 67 to 137 folds into the HTH CENPB-type domain; that stretch reads ERKRKRESKY…KRRNNVGFGT (71 aa). The DDE-1 domain occupies 167–360; that stretch reads FSPEDVFGCA…VPRQLILSSF (194 aa). Residues 402–421 show a composition bias toward basic and acidic residues; it reads DPGPRVCKEETGTEDSGREE. The disordered stretch occupies residues 402-426; it reads DPGPRVCKEETGTEDSGREEDGFEP.

This sequence belongs to the tigger transposable element derived protein family.

The protein localises to the nucleus. The chain is Tigger transposable element-derived protein 3 (Tigd3) from Mus musculus (Mouse).